The following is a 404-amino-acid chain: Protein ORF23 (404 aa).

Belongs to the lymphocryptovirus BTRF1 family. In terms of assembly, interacts with ORF34.

Its subcellular location is the host nucleus. It is found in the host cytoplasm. Functionally, plays a role in the expression of late genes. This is Protein ORF23 (ORF23) from Homo sapiens (Human).